The sequence spans 815 residues: Patatin-like phospholipase domain-containing protein LELG_00944 (815 aa).

Positions 41-50 are enriched in polar residues; sequence VSTTAPTTPL. Disordered stretches follow at residues 41-105 and 140-166; these read VSTT…PQLK and SENL…STSP. Residues 54 to 73 are compositionally biased toward low complexity; the sequence is LDMGDLSLLGGELGNGSDDV. Positions 74 to 94 are enriched in acidic residues; that stretch reads VVGDDDDDDDDDDDDDDDDDD. The span at 148-160 shows a compositional bias: basic residues; sequence KRTKFAKSSKSSK. A helical membrane pass occupies residues 185 to 205; it reads WPILTFVVIWVTILGFLYLAV. A PNPLA domain is found at 360-552; it reads LCLSGGACFA…RTDIPIDALN (193 aa). The GXSXG signature appears at 391–395; the sequence is GTSGG. The Nucleophile role is filled by serine 393. The active-site Proton acceptor is aspartate 539. A disordered region spans residues 753-815; that stretch reads GSTLRDDDAD…LTKERRHTVY (63 aa). The segment covering 759–799 has biased composition (acidic residues); the sequence is DDADADVDEDDNEDEDEEDEDENDYEEYDVEDLDDPYESDA.

It belongs to the PLPL family.

It localises to the membrane. Probable lipid hydrolase. The polypeptide is Patatin-like phospholipase domain-containing protein LELG_00944 (Lodderomyces elongisporus (strain ATCC 11503 / CBS 2605 / JCM 1781 / NBRC 1676 / NRRL YB-4239) (Yeast)).